We begin with the raw amino-acid sequence, 873 residues long: Zinc fingers and homeoboxes protein 1 (873 aa).

The segment at 24–63 is disordered; sequence LISDLDEGPPVLTPVENTRAESISSDEEVHESVDSDNQQN. The residue at position 36 (Thr36) is a Phosphothreonine. Ser45, Ser47, and Ser48 each carry phosphoserine. 2 consecutive C2H2-type zinc fingers follow at residues 70-93 and 102-125; these read YECKYCTFQTPDLNMFTFHVDSEH and YVCVECNFLTKRYDALSEHNLKYH. Residue Lys159 forms a Glycyl lysine isopeptide (Lys-Gly) (interchain with G-Cter in SUMO2) linkage. The disordered stretch occupies residues 198–236; the sequence is VHHNSVEDVPEEKENEIKPDREETVENPSSSASESNTST. Ser202 bears the Phosphoserine mark. Basic and acidic residues predominate over residues 212 to 221; it reads NEIKPDREET. The span at 223–236 shows a compositional bias: low complexity; it reads ENPSSSASESNTST. The tract at residues 272-432 is required for dimerization; that stretch reads NSNLIPKVLI…QNNVQKSQVP (161 aa). The interval 272–564 is required for interaction with NFYA; the sequence is NSNLIPKVLI…VQPKQSWNPF (293 aa). A DNA-binding region (homeobox 1) is located at residues 284–346; that stretch reads NSIPTYNAAL…LKHGVSWTPE (63 aa). Positions 431 to 454 are disordered; the sequence is VPAAQPTAETKPATAAVPTSQSVK. Glycyl lysine isopeptide (Lys-Gly) (interchain with G-Cter in SUMO2) cross-links involve residues Lys441, Lys454, and Lys485. The homeobox 2 DNA-binding region spans 464–526; the sequence is SFGIRAKKTK…YNQRNSKSNQ (63 aa). Disordered regions lie at residues 544–563, 626–668, and 732–769; these read DETTESPTVGTVQPKQSWNP, KEEK…CKKT, and SSMNGLSSLRKRGRGRPKGRGRGRPRGRPRGSKRINNW. The segment covering 550 to 562 has biased composition (polar residues); that stretch reads PTVGTVQPKQSWN. The segment at residues 569-630 is a DNA-binding region (homeobox 3); it reads PQKFKEKTAE…KSKALKEEKM (62 aa). Residue Lys629 forms a Glycyl lysine isopeptide (Lys-Gly) (interchain with G-Cter in SUMO2) linkage. Phosphoserine is present on Ser648. The homeobox 4 DNA-binding region spans 660 to 722; it reads STGKICKKTP…YAWKNGNLKW (63 aa). The required for nuclear localization stretch occupies residues 734–768; sequence MNGLSSLRKRGRGRPKGRGRGRPRGRPRGSKRINN. Residues 740–764 show a composition bias toward basic residues; sequence LRKRGRGRPKGRGRGRPRGRPRGSK. At Ser774 the chain carries Phosphoserine. A DNA-binding region (homeobox 5) is located at residues 777–832; that stretch reads KFKTGTAILKDYYLKHKFLNEQDLDELVNKSHMGYEQVREWFAERQRRSELGIELF. A disordered region spans residues 829 to 873; sequence IELFEENEEEDEVIDDQEEDEEETDDSDTWEPPRHVKRKLSKSDD. Acidic residues predominate over residues 831–857; it reads LFEENEEEDEVIDDQEEDEEETDDSDT. Residues 831-873 are required for repressor activity; that stretch reads LFEENEEEDEVIDDQEEDEEETDDSDTWEPPRHVKRKLSKSDD. Over residues 863–873 the composition is skewed to basic residues; it reads HVKRKLSKSDD.

The protein belongs to the ZHX family. Forms homodimers. Heterodimer (via HD1 domain) with ZHX2 (via HD1 domain). Also forms a heterodimer with ZHX3 which is a prerequisite for repressor activity. Interacts with ATF7IP and NFYA. Interacts (via homeobox domains) with DNMT3B (via PWWP domain).

It localises to the nucleus. Its function is as follows. Acts as a transcriptional repressor. Increases DNMT3B-mediated repressive transcriptional activity when DNMT3B is tethered to DNA. May link molecule between DNMT3B and other co-repressor proteins. This chain is Zinc fingers and homeoboxes protein 1 (ZHX1), found in Pongo pygmaeus (Bornean orangutan).